The following is a 648-amino-acid chain: Bifunctional protein TilS/HprT (648 aa).

Residue S29–S34 coordinates ATP. Residue D627 participates in Mg(2+) binding.

The protein in the N-terminal section; belongs to the tRNA(Ile)-lysidine synthase family. This sequence in the C-terminal section; belongs to the purine/pyrimidine phosphoribosyltransferase family. Mg(2+) is required as a cofactor.

It is found in the cytoplasm. The enzyme catalyses IMP + diphosphate = hypoxanthine + 5-phospho-alpha-D-ribose 1-diphosphate. The catalysed reaction is GMP + diphosphate = guanine + 5-phospho-alpha-D-ribose 1-diphosphate. It carries out the reaction cytidine(34) in tRNA(Ile2) + L-lysine + ATP = lysidine(34) in tRNA(Ile2) + AMP + diphosphate + H(+). Its function is as follows. Ligates lysine onto the cytidine present at position 34 of the AUA codon-specific tRNA(Ile) that contains the anticodon CAU, in an ATP-dependent manner. Cytidine is converted to lysidine, thus changing the amino acid specificity of the tRNA from methionine to isoleucine. This is Bifunctional protein TilS/HprT (tilS/hprT) from Listeria monocytogenes serovar 1/2a (strain ATCC BAA-679 / EGD-e).